A 408-amino-acid polypeptide reads, in one-letter code: Phosphoglycerate kinase (408 aa).

Substrate-binding positions include 24–26 (DLN), R39, 62–65 (HLGR), R121, and R161. ATP-binding positions include K211, G307, E338, and 364-367 (GGDS).

The protein belongs to the phosphoglycerate kinase family. Monomer.

The protein localises to the cytoplasm. The catalysed reaction is (2R)-3-phosphoglycerate + ATP = (2R)-3-phospho-glyceroyl phosphate + ADP. It participates in carbohydrate degradation; glycolysis; pyruvate from D-glyceraldehyde 3-phosphate: step 2/5. The protein is Phosphoglycerate kinase of Paenarthrobacter aurescens (strain TC1).